The sequence spans 63 residues: Small ribosomal subunit protein bS21 (63 aa).

The protein belongs to the bacterial ribosomal protein bS21 family.

The sequence is that of Small ribosomal subunit protein bS21 from Parabacteroides distasonis (strain ATCC 8503 / DSM 20701 / CIP 104284 / JCM 5825 / NCTC 11152).